The sequence spans 444 residues: sn-glycerol-3-phosphate-binding periplasmic protein UgpB (444 aa).

Residues 1 to 30 form the signal peptide; that stretch reads MFNNTIRKTHAIRTAAACVAFALMSAGAQA. Tyr-72, Glu-96, Ser-151, Ser-277, Gly-314, Tyr-353, and Arg-404 together coordinate sn-glycerol 3-phosphate.

This sequence belongs to the bacterial solute-binding protein 1 family. As to quaternary structure, the complex is composed of two ATP-binding proteins (UgpC), two transmembrane proteins (UgpA and UgpE) and a solute-binding protein (UgpB).

The protein resides in the periplasm. Functionally, part of the ABC transporter complex UgpBAEC involved in sn-glycerol-3-phosphate (G3P) import. Binds G3P. This is sn-glycerol-3-phosphate-binding periplasmic protein UgpB (ugpB) from Pectobacterium atrosepticum (strain SCRI 1043 / ATCC BAA-672) (Erwinia carotovora subsp. atroseptica).